The chain runs to 382 residues: D-galactonate dehydratase (382 aa).

Asp-183 is a binding site for Mg(2+). The Proton donor role is filled by His-185. Mg(2+) contacts are provided by Glu-209 and Glu-235. Residue His-285 is the Proton acceptor of the active site.

Belongs to the mandelate racemase/muconate lactonizing enzyme family. GalD subfamily. The cofactor is Mg(2+).

It carries out the reaction D-galactonate = 2-dehydro-3-deoxy-D-galactonate + H2O. The protein operates within carbohydrate acid metabolism; D-galactonate degradation; D-glyceraldehyde 3-phosphate and pyruvate from D-galactonate: step 1/3. In terms of biological role, catalyzes the dehydration of D-galactonate to 2-keto-3-deoxy-D-galactonate. The sequence is that of D-galactonate dehydratase from Ralstonia nicotianae (strain ATCC BAA-1114 / GMI1000) (Ralstonia solanacearum).